A 334-amino-acid chain; its full sequence is L-lactate dehydrogenase B-A chain (334 aa).

Residues 30–58 (GQVGMACAVSVLLRELADELALVDVVEDR) and Arg100 each bind NAD(+). The substrate site is built by Arg107, Asn139, and Arg170. An NAD(+)-binding site is contributed by Asn139. The Proton acceptor role is filled by His194. Thr249 contacts substrate.

It belongs to the LDH/MDH superfamily. LDH family. Homotetramer.

The protein resides in the cytoplasm. The catalysed reaction is (S)-lactate + NAD(+) = pyruvate + NADH + H(+). The protein operates within fermentation; pyruvate fermentation to lactate; (S)-lactate from pyruvate: step 1/1. The sequence is that of L-lactate dehydrogenase B-A chain (ldhba) from Danio rerio (Zebrafish).